We begin with the raw amino-acid sequence, 468 residues long: Aspartate ammonia-lyase (468 aa).

Positions 99, 138, 139, 140, and 185 each coordinate L-aspartate. An SS loop region spans residues glycine 315–asparagine 324. Catalysis depends on serine 316, which acts as the Proton acceptor. L-aspartate is bound by residues serine 317 and lysine 322.

The protein belongs to the class-II fumarase/aspartase family. Aspartase subfamily. As to quaternary structure, homotetramer.

It catalyses the reaction L-aspartate = fumarate + NH4(+). Catalyzes the reversible conversion of L-aspartate to fumarate and ammonia. This chain is Aspartate ammonia-lyase (aspA), found in Helicobacter pylori (strain ATCC 700392 / 26695) (Campylobacter pylori).